The sequence spans 355 residues: Peptide chain release factor 1 (355 aa).

Q231 bears the N5-methylglutamine mark.

Belongs to the prokaryotic/mitochondrial release factor family. In terms of processing, methylated by PrmC. Methylation increases the termination efficiency of RF1.

It localises to the cytoplasm. In terms of biological role, peptide chain release factor 1 directs the termination of translation in response to the peptide chain termination codons UAG and UAA. In Erythrobacter litoralis (strain HTCC2594), this protein is Peptide chain release factor 1.